A 276-amino-acid chain; its full sequence is Release factor glutamine methyltransferase (276 aa).

Residues 117-121 (GTGTG), Asp140, Trp168, and Asn182 contribute to the S-adenosyl-L-methionine site. 182–185 (NPPY) is a binding site for substrate.

It belongs to the protein N5-glutamine methyltransferase family. PrmC subfamily.

The enzyme catalyses L-glutaminyl-[peptide chain release factor] + S-adenosyl-L-methionine = N(5)-methyl-L-glutaminyl-[peptide chain release factor] + S-adenosyl-L-homocysteine + H(+). Its function is as follows. Methylates the class 1 translation termination release factors RF1/PrfA and RF2/PrfB on the glutamine residue of the universally conserved GGQ motif. In Yersinia pestis, this protein is Release factor glutamine methyltransferase.